The sequence spans 215 residues: 3-isopropylmalate dehydratase small subunit (215 aa).

It belongs to the LeuD family. LeuD type 1 subfamily. As to quaternary structure, heterodimer of LeuC and LeuD.

It catalyses the reaction (2R,3S)-3-isopropylmalate = (2S)-2-isopropylmalate. Its pathway is amino-acid biosynthesis; L-leucine biosynthesis; L-leucine from 3-methyl-2-oxobutanoate: step 2/4. Functionally, catalyzes the isomerization between 2-isopropylmalate and 3-isopropylmalate, via the formation of 2-isopropylmaleate. This Xylella fastidiosa (strain M12) protein is 3-isopropylmalate dehydratase small subunit.